The sequence spans 316 residues: MTQLEALKQLSMVVADTGDLEAIKRYQPHDATTNPSLILKAFELPGYQALIDETLAQVKADIADPQARVDEAVDRLSVAMGSEITQLIPGRVSTEVAAKLSFDREASIAKAHRLIELYEQRGIGRERVLIKLASTWEGIRAAEQLEKEGIQCNLTLLFSEAQARACFDAGVYLISPFVGRVTDWYKQKTGQEYTPEEDPGVVFVRKVCDIASRYRYDTVVMGASFRTKGQILGLAGCNRLTISPALLEELESEEGDIERKISDVGDASERLAPIDEAAFRWGLNQDAMATEKLAEGIRRFADDQATLEEKLAARLG.

The Schiff-base intermediate with substrate role is filled by lysine 131.

It belongs to the transaldolase family. Type 1 subfamily. Homodimer.

The protein resides in the cytoplasm. It catalyses the reaction D-sedoheptulose 7-phosphate + D-glyceraldehyde 3-phosphate = D-erythrose 4-phosphate + beta-D-fructose 6-phosphate. The protein operates within carbohydrate degradation; pentose phosphate pathway; D-glyceraldehyde 3-phosphate and beta-D-fructose 6-phosphate from D-ribose 5-phosphate and D-xylulose 5-phosphate (non-oxidative stage): step 2/3. Its function is as follows. Transaldolase is important for the balance of metabolites in the pentose-phosphate pathway. The sequence is that of Transaldolase from Chromohalobacter salexigens (strain ATCC BAA-138 / DSM 3043 / CIP 106854 / NCIMB 13768 / 1H11).